Reading from the N-terminus, the 169-residue chain is X polypeptide (169 aa).

Belongs to the IagB/IpgF/P19 family.

This Escherichia coli protein is X polypeptide (X).